A 229-amino-acid polypeptide reads, in one-letter code: MSTWANLGLQDSASPLMEQLIFFHDHALLILVMITVLVGYLMFMLFFNSYVNRFLLHGQLIEMIWTILPAIILLFIAMPSLRLLYLLDEINEPSITLKSIGHQWYWSYEYSDFNNVEFDSYMIPTNELSNDGFRLLDVDNRIVLPMNSQIRILVTAADVIHSWTVPALGVKVDGTPGRLNQTNFFINRPGLFYGQCSEICGANHSFMPIVIESVPVNYFIKWISNSVNS.

Residues 1–26 (MSTWANLGLQDSASPLMEQLIFFHDH) are Mitochondrial intermembrane-facing. A helical membrane pass occupies residues 27–48 (ALLILVMITVLVGYLMFMLFFN). Residues 49-62 (SYVNRFLLHGQLIE) lie on the Mitochondrial matrix side of the membrane. The chain crosses the membrane as a helical span at residues 63–82 (MIWTILPAIILLFIAMPSLR). Residues 83 to 229 (LLYLLDEINE…IKWISNSVNS (147 aa)) are Mitochondrial intermembrane-facing. The Cu cation site is built by histidine 161, cysteine 196, glutamate 198, cysteine 200, histidine 204, and methionine 207. Glutamate 198 is a Mg(2+) binding site.

Belongs to the cytochrome c oxidase subunit 2 family. As to quaternary structure, component of the cytochrome c oxidase (complex IV, CIV), a multisubunit enzyme composed of a catalytic core of 3 subunits and several supernumerary subunits. The complex exists as a monomer or a dimer and forms supercomplexes (SCs) in the inner mitochondrial membrane with ubiquinol-cytochrome c oxidoreductase (cytochrome b-c1 complex, complex III, CIII). It depends on Cu cation as a cofactor.

The protein resides in the mitochondrion inner membrane. The enzyme catalyses 4 Fe(II)-[cytochrome c] + O2 + 8 H(+)(in) = 4 Fe(III)-[cytochrome c] + 2 H2O + 4 H(+)(out). In terms of biological role, component of the cytochrome c oxidase, the last enzyme in the mitochondrial electron transport chain which drives oxidative phosphorylation. The respiratory chain contains 3 multisubunit complexes succinate dehydrogenase (complex II, CII), ubiquinol-cytochrome c oxidoreductase (cytochrome b-c1 complex, complex III, CIII) and cytochrome c oxidase (complex IV, CIV), that cooperate to transfer electrons derived from NADH and succinate to molecular oxygen, creating an electrochemical gradient over the inner membrane that drives transmembrane transport and the ATP synthase. Cytochrome c oxidase is the component of the respiratory chain that catalyzes the reduction of oxygen to water. Electrons originating from reduced cytochrome c in the intermembrane space (IMS) are transferred via the dinuclear copper A center (CU(A)) of subunit 2 and heme A of subunit 1 to the active site in subunit 1, a binuclear center (BNC) formed by heme A3 and copper B (CU(B)). The BNC reduces molecular oxygen to 2 water molecules using 4 electrons from cytochrome c in the IMS and 4 protons from the mitochondrial matrix. The chain is Cytochrome c oxidase subunit 2 (mt:CoII) from Drosophila miranda (Fruit fly).